The sequence spans 229 residues: Large ribosomal subunit protein uL1 (229 aa).

Belongs to the universal ribosomal protein uL1 family. In terms of assembly, part of the 50S ribosomal subunit.

Functionally, binds directly to 23S rRNA. The L1 stalk is quite mobile in the ribosome, and is involved in E site tRNA release. Its function is as follows. Protein L1 is also a translational repressor protein, it controls the translation of the L11 operon by binding to its mRNA. The protein is Large ribosomal subunit protein uL1 of Lactococcus lactis subsp. cremoris (strain MG1363).